A 127-amino-acid chain; its full sequence is Classical arabinogalactan protein 10 (127 aa).

The signal sequence occupies residues 1–21; the sequence is MASKSVVVLLFLALIASSAIA. Gln-22 carries the post-translational modification Pyrrolidone carboxylic acid. Positions 22–107 are disordered; it reads QAPGPAPTRS…TGSTPVDNNN (86 aa). 5 positions are modified to 4-hydroxyproline: Pro-24, Pro-26, Pro-28, Pro-32, and Pro-36. Pro-24, Pro-26, Pro-28, Pro-32, and Pro-36 each carry an O-linked (Ara...) hydroxyproline glycan. Pro residues-rich tracts occupy residues 25–39, 48–58, and 66–86; these read GPAP…PAQP, SITPTPTPTPS, and VSPP…PPTS. The span at 98–107 shows a compositional bias: polar residues; that stretch reads TGSTPVDNNN. The GPI-anchor amidated asparagine moiety is linked to residue Asn-107. Positions 108–127 are cleaved as a propeptide — removed in mature form; it reads AATLAAGSLAGFVFVASLLL.

The protein belongs to the classical AGP family. In terms of processing, O-glycosylated on hydroxyprolines; noncontiguous hydroxylproline residues are glycosylated with arabinogalactan. In terms of tissue distribution, predominantly expressed in flowers and at a lower level in roots and siliques.

It localises to the cell membrane. Functionally, proteoglycan that seems to be implicated in diverse developmental roles such as differentiation, cell-cell recognition, embryogenesis and programmed cell death. The polypeptide is Classical arabinogalactan protein 10 (AGP10) (Arabidopsis thaliana (Mouse-ear cress)).